A 501-amino-acid chain; its full sequence is Glycerol kinase (501 aa).

Thr11 provides a ligand contact to ADP. Residues Thr11, Thr12, and Ser13 each coordinate ATP. Sn-glycerol 3-phosphate is bound at residue Thr11. Residue Arg15 coordinates ADP. Residues Arg81, Glu82, Tyr133, and Asp242 each coordinate sn-glycerol 3-phosphate. The glycerol site is built by Arg81, Glu82, Tyr133, Asp242, and Gln243. Residues Thr264 and Gly307 each contribute to the ADP site. The ATP site is built by Thr264, Gly307, Gln311, and Gly409. 2 residues coordinate ADP: Gly409 and Asn413.

Belongs to the FGGY kinase family.

The enzyme catalyses glycerol + ATP = sn-glycerol 3-phosphate + ADP + H(+). It functions in the pathway polyol metabolism; glycerol degradation via glycerol kinase pathway; sn-glycerol 3-phosphate from glycerol: step 1/1. With respect to regulation, inhibited by fructose 1,6-bisphosphate (FBP). Its function is as follows. Key enzyme in the regulation of glycerol uptake and metabolism. Catalyzes the phosphorylation of glycerol to yield sn-glycerol 3-phosphate. This Borrelia garinii subsp. bavariensis (strain ATCC BAA-2496 / DSM 23469 / PBi) (Borreliella bavariensis) protein is Glycerol kinase.